A 374-amino-acid chain; its full sequence is Tuliposide A-converting enzyme b2, amyloplastic (374 aa).

The transit peptide at 1–68 (MSVALFCGPP…TNSSLSPSPT (68 aa)) directs the protein to the amyloplast. Ser-226 serves as the catalytic Acyl-ester intermediate. Residues Asp-316 and His-348 each act as charge relay system in the active site.

This sequence belongs to the AB hydrolase superfamily. Homodimer. In terms of tissue distribution, highly expressed in pistil and bulb scales. Lower expression in stem, and barely detected in root, leaf, petal and stamen.

It localises to the plastid. The protein resides in the amyloplast. It carries out the reaction 6-tuliposide A = tulipalin A + D-glucose. Functionally, lactone-forming carboxylesterases, specifically catalyzing intramolecular transesterification, but not hydrolysis. Involved in the biosynthesis of tulipalins, defensive chemicals that show antimicrobial activities against a broad range of strains of bacteria and fungi. Substrates are 6-tuliposide A &gt; 6-tuliposide B. The polypeptide is Tuliposide A-converting enzyme b2, amyloplastic (TCEA-B2) (Tulipa gesneriana (Garden tulip)).